Consider the following 422-residue polypeptide: BTB/POZ domain-containing protein KCTD18 (422 aa).

One can recognise a BTB domain in the interval 12–80 (DILRLNVGGC…YLHGEVHIPT (69 aa)). Disordered stretches follow at residues 289–357 (VKNS…THLP) and 376–422 (LRRT…DQTK). A compositionally biased stretch (pro residues) spans 396 to 406 (PAGPPEPPPDA). Polar residues predominate over residues 413-422 (WTENGQDQTK).

This is BTB/POZ domain-containing protein KCTD18 (KCTD18) from Bos taurus (Bovine).